Here is a 505-residue protein sequence, read N- to C-terminus: Forkhead box protein O4 (505 aa).

3 disordered regions span residues 1–66 (MDPE…HSEP), 175–244 (SSWW…SPCP), and 257–276 (RPRSSSNASTVSTRLSPMRP). T32 carries the phosphothreonine; by PKB/AKT1 modification. The interval 97 to 215 (RRNAWGNQSY…RGRSKGPKKK (119 aa)) is required for interaction with FOXK1. The segment at residues 100–188 (AWGNQSYAEL…MLNPDGGKGG (89 aa)) is a DNA-binding region (fork-head). Phosphoserine; by PKB/AKT1 is present on S197. Over residues 205–216 (LRGRSKGPKKKP) the composition is skewed to basic residues. A compositionally biased stretch (polar residues) spans 257–271 (RPRSSSNASTVSTRL). Position 262 is a phosphoserine; by PKB/AKT1 (S262).

In terms of assembly, interacts with CREBBP/CBP, MYOCD, SIRT1, SRF and YWHAZ. Acetylated by CREBBP/CBP and deacetylated by SIRT1. Binding of YWHAZ inhibits DNA-binding. Interacts with USP7; the interaction is enhanced in presence of hydrogen peroxide and occurs independently of TP53. Interacts with NLK, and this inhibits monoubiquitination and transcriptional activity. Interacts with FOXK1; the interaction inhibits MEF2C transactivation activity. Acetylation by CREBBP/CBP is induced by oxidative stress and inhibits transcriptional activity. Deacetylation by SIRT1 is NAD-dependent and stimulates transcriptional activity. Post-translationally, phosphorylation by PKB/AKT1 inhibits transcriptional activity and is responsible for cytoplasmic localization. May be phosphorylated at multiple sites by NLK. In terms of processing, monoubiquitinated; monoubiquitination is induced by oxidative stress and reduced by deacetylase inhibitors; results in its relocalization to the nucleus and its increased transcriptional activity. Deubiquitinated by USP7; deubiquitination is induced by oxidative stress; enhances its interaction with USP7 and consequently, deubiquitination; increases its translocation to the cytoplasm and inhibits its transcriptional activity. Hydrogene-peroxide-induced ubiquitination and USP7-mediated deubiquitination have no major effect on its protein stability. As to expression, strongly expressed in brown adipose tissue and weakly in white adipose tissue (at protein level). Expressed in skeletal muscle.

The protein localises to the cytoplasm. The protein resides in the nucleus. Transcription factor involved in the regulation of the insulin signaling pathway. Binds to insulin-response elements (IREs) and can activate transcription of IGFBP1. Down-regulates expression of HIF1A and suppresses hypoxia-induced transcriptional activation of HIF1A-modulated genes. Also involved in negative regulation of the cell cycle. Involved in increased proteasome activity in embryonic stem cells (ESCs) by activating expression of PSMD11 in ESCs, leading to enhanced assembly of the 26S proteasome, followed by higher proteasome activity. Represses smooth muscle cell differentiation by inhibiting the transcriptional coactivator activity of myocardin. In Mus musculus (Mouse), this protein is Forkhead box protein O4 (Foxo4).